The primary structure comprises 199 residues: Recombination protein RecR (199 aa).

The segment at 57 to 72 adopts a C4-type zinc-finger fold; the sequence is CQSCRTYTEETLCPIC. The 96-residue stretch at 81 to 176 folds into the Toprim domain; it reads STICVVETPA…MISRIAHGVP (96 aa).

This sequence belongs to the RecR family.

May play a role in DNA repair. It seems to be involved in an RecBC-independent recombinational process of DNA repair. It may act with RecF and RecO. The chain is Recombination protein RecR from Shewanella putrefaciens (strain CN-32 / ATCC BAA-453).